Consider the following 411-residue polypeptide: Adenylosuccinate synthetase (411 aa).

Residues 11–17 and 39–41 each bind GTP; these read GDEGKGK and GHT. Asp12 (proton acceptor) is an active-site residue. Mg(2+) is bound by residues Asp12 and Gly39. Residues 12 to 15, 37 to 40, Thr121, Arg135, Gln215, Thr230, and Arg294 each bind IMP; these read DEGK and NAGH. The active-site Proton donor is His40. 290–296 is a binding site for substrate; the sequence is TTTKRPR. Residues Arg296, 322–324, and 400–402 each bind GTP; these read KLD and STS.

It belongs to the adenylosuccinate synthetase family. In terms of assembly, homodimer. Mg(2+) serves as cofactor.

It is found in the cytoplasm. The catalysed reaction is IMP + L-aspartate + GTP = N(6)-(1,2-dicarboxyethyl)-AMP + GDP + phosphate + 2 H(+). It functions in the pathway purine metabolism; AMP biosynthesis via de novo pathway; AMP from IMP: step 1/2. Plays an important role in the de novo pathway of purine nucleotide biosynthesis. Catalyzes the first committed step in the biosynthesis of AMP from IMP. This is Adenylosuccinate synthetase from Helicobacter acinonychis (strain Sheeba).